A 271-amino-acid chain; its full sequence is Tryptophan synthase alpha chain (271 aa).

Residues E47 and D58 each act as proton acceptor in the active site.

This sequence belongs to the TrpA family. Tetramer of two alpha and two beta chains.

The catalysed reaction is (1S,2R)-1-C-(indol-3-yl)glycerol 3-phosphate + L-serine = D-glyceraldehyde 3-phosphate + L-tryptophan + H2O. Its pathway is amino-acid biosynthesis; L-tryptophan biosynthesis; L-tryptophan from chorismate: step 5/5. The alpha subunit is responsible for the aldol cleavage of indoleglycerol phosphate to indole and glyceraldehyde 3-phosphate. This Thermus thermophilus (strain ATCC BAA-163 / DSM 7039 / HB27) protein is Tryptophan synthase alpha chain.